Consider the following 452-residue polypeptide: Tubulin beta-2 chain (452 aa).

Residues glutamine 11, glutamate 74, serine 143, valine 147, threonine 148, glycine 149, asparagine 209, and asparagine 231 each coordinate GTP. Glutamate 74 contacts Mg(2+). Positions 431-452 are disordered; sequence QEATADDEAEFEEEGEVEGEYD. Over residues 434–452 the composition is skewed to acidic residues; that stretch reads TADDEAEFEEEGEVEGEYD.

Belongs to the tubulin family. In terms of assembly, dimer of alpha and beta chains. A typical microtubule is a hollow water-filled tube with an outer diameter of 25 nm and an inner diameter of 15 nM. Alpha-beta heterodimers associate head-to-tail to form protofilaments running lengthwise along the microtubule wall with the beta-tubulin subunit facing the microtubule plus end conferring a structural polarity. Microtubules usually have 13 protofilaments but different protofilament numbers can be found in some organisms and specialized cells. The cofactor is Mg(2+).

The protein localises to the cytoplasm. The protein resides in the cytoskeleton. Functionally, tubulin is the major constituent of microtubules, a cylinder consisting of laterally associated linear protofilaments composed of alpha- and beta-tubulin heterodimers. Microtubules grow by the addition of GTP-tubulin dimers to the microtubule end, where a stabilizing cap forms. Below the cap, tubulin dimers are in GDP-bound state, owing to GTPase activity of alpha-tubulin. The chain is Tubulin beta-2 chain from Homarus americanus (American lobster).